Here is a 561-residue protein sequence, read N- to C-terminus: Malto-oligosyltrehalose trehalohydrolase (561 aa).

Residue 253 to 258 (RLDAVH) participates in substrate binding. D255 acts as the Nucleophile in catalysis. Catalysis depends on E286, which acts as the Proton donor. Substrate is bound by residues 311–315 (DDFHH) and 379–384 (HDQVGN).

The protein belongs to the glycosyl hydrolase 13 family. As to quaternary structure, homodimer.

The protein localises to the cytoplasm. The catalysed reaction is hydrolysis of (1-&gt;4)-alpha-D-glucosidic linkage in 4-alpha-D-[(1-&gt;4)-alpha-D-glucanosyl]n trehalose to yield trehalose and (1-&gt;4)-alpha-D-glucan.. It participates in glycan biosynthesis; trehalose biosynthesis. The chain is Malto-oligosyltrehalose trehalohydrolase (treZ) from Saccharolobus solfataricus (strain ATCC 35092 / DSM 1617 / JCM 11322 / P2) (Sulfolobus solfataricus).